The primary structure comprises 561 residues: Dihydroxy-acid dehydratase (561 aa).

Cys-50 is a [2Fe-2S] cluster binding site. Asp-82 is a binding site for Mg(2+). A [2Fe-2S] cluster-binding site is contributed by Cys-123. Residues Asp-124 and Lys-125 each coordinate Mg(2+). Position 125 is an N6-carboxylysine (Lys-125). Cys-195 provides a ligand contact to [2Fe-2S] cluster. A Mg(2+)-binding site is contributed by Glu-447. Ser-473 serves as the catalytic Proton acceptor.

Belongs to the IlvD/Edd family. As to quaternary structure, homodimer. The cofactor is [2Fe-2S] cluster. It depends on Mg(2+) as a cofactor.

The enzyme catalyses (2R)-2,3-dihydroxy-3-methylbutanoate = 3-methyl-2-oxobutanoate + H2O. The catalysed reaction is (2R,3R)-2,3-dihydroxy-3-methylpentanoate = (S)-3-methyl-2-oxopentanoate + H2O. It participates in amino-acid biosynthesis; L-isoleucine biosynthesis; L-isoleucine from 2-oxobutanoate: step 3/4. It functions in the pathway amino-acid biosynthesis; L-valine biosynthesis; L-valine from pyruvate: step 3/4. Functionally, functions in the biosynthesis of branched-chain amino acids. Catalyzes the dehydration of (2R,3R)-2,3-dihydroxy-3-methylpentanoate (2,3-dihydroxy-3-methylvalerate) into 2-oxo-3-methylpentanoate (2-oxo-3-methylvalerate) and of (2R)-2,3-dihydroxy-3-methylbutanoate (2,3-dihydroxyisovalerate) into 2-oxo-3-methylbutanoate (2-oxoisovalerate), the penultimate precursor to L-isoleucine and L-valine, respectively. The polypeptide is Dihydroxy-acid dehydratase (Crocosphaera subtropica (strain ATCC 51142 / BH68) (Cyanothece sp. (strain ATCC 51142))).